Here is a 673-residue protein sequence, read N- to C-terminus: UvrABC system protein B (673 aa).

One can recognise a Helicase ATP-binding domain in the interval glutamate 26–arginine 414. Glycine 39–threonine 46 serves as a coordination point for ATP. The short motif at tyrosine 92–isoleucine 115 is the Beta-hairpin element. Residues glutamine 431–leucine 597 enclose the Helicase C-terminal domain. Residues glutamine 633 to leucine 668 enclose the UVR domain.

It belongs to the UvrB family. Forms a heterotetramer with UvrA during the search for lesions. Interacts with UvrC in an incision complex.

The protein localises to the cytoplasm. The UvrABC repair system catalyzes the recognition and processing of DNA lesions. A damage recognition complex composed of 2 UvrA and 2 UvrB subunits scans DNA for abnormalities. Upon binding of the UvrA(2)B(2) complex to a putative damaged site, the DNA wraps around one UvrB monomer. DNA wrap is dependent on ATP binding by UvrB and probably causes local melting of the DNA helix, facilitating insertion of UvrB beta-hairpin between the DNA strands. Then UvrB probes one DNA strand for the presence of a lesion. If a lesion is found the UvrA subunits dissociate and the UvrB-DNA preincision complex is formed. This complex is subsequently bound by UvrC and the second UvrB is released. If no lesion is found, the DNA wraps around the other UvrB subunit that will check the other stand for damage. This chain is UvrABC system protein B, found in Salmonella paratyphi A (strain ATCC 9150 / SARB42).